Consider the following 425-residue polypeptide: Gamma-glutamyl phosphate reductase (425 aa).

This sequence belongs to the gamma-glutamyl phosphate reductase family.

The protein localises to the cytoplasm. The catalysed reaction is L-glutamate 5-semialdehyde + phosphate + NADP(+) = L-glutamyl 5-phosphate + NADPH + H(+). Its pathway is amino-acid biosynthesis; L-proline biosynthesis; L-glutamate 5-semialdehyde from L-glutamate: step 2/2. Functionally, catalyzes the NADPH-dependent reduction of L-glutamate 5-phosphate into L-glutamate 5-semialdehyde and phosphate. The product spontaneously undergoes cyclization to form 1-pyrroline-5-carboxylate. In Symbiobacterium thermophilum (strain DSM 24528 / JCM 14929 / IAM 14863 / T), this protein is Gamma-glutamyl phosphate reductase.